The primary structure comprises 1040 residues: Multidrug resistance protein MdtB (1040 aa).

A run of 12 helical transmembrane segments spans residues 25-45, 347-367, 369-389, 396-416, 440-460, 472-492, 537-557, 863-883, 888-908, 910-930, 968-988, and 998-1018; these read LLMA…PVAA, LMLA…NIPA, IIPG…MVFL, LTLM…IVVI, IGFT…PLLF, FAVT…TLTP, WLTL…WIVI, LGST…VLGV, FIHP…ALLA, IIAG…LIGI, ILMT…STGV, and IAMV…TPVI.

Belongs to the resistance-nodulation-cell division (RND) (TC 2.A.6) family. MdtB subfamily. Part of a tripartite efflux system composed of MdtA, MdtB and MdtC. MdtB forms a heteromultimer with MdtC.

It is found in the cell inner membrane. The sequence is that of Multidrug resistance protein MdtB from Salmonella choleraesuis (strain SC-B67).